The sequence spans 90 residues: Small ribosomal subunit protein bS20 (90 aa).

This sequence belongs to the bacterial ribosomal protein bS20 family.

In terms of biological role, binds directly to 16S ribosomal RNA. The chain is Small ribosomal subunit protein bS20 from Rickettsia akari (strain Hartford).